The primary structure comprises 217 residues: Photosynthetic NDH subunit of lumenal location 4, chloroplastic (217 aa).

A chloroplast-targeting transit peptide spans 1 to 34 (MAISTLTLTQSLYTRSFRPTIFFSSSSSSSFSCL). Disulfide bonds link cysteine 87–cysteine 99 and cysteine 188–cysteine 193. The region spanning 112–211 (GVLVNIHYTA…LYDINFVEIY (100 aa)) is the PPIase FKBP-type domain.

The protein belongs to the FKBP-type PPIase family. In terms of assembly, part of the chloroplast NDH complex, composed of a mixture of chloroplast and nucleus encoded subunits. Component of the NDH lumenal subcomplex, at least composed of PnsL1, PnsL2, PnsL3, PnsL4 and PnsL5.

It localises to the plastid. The protein resides in the chloroplast thylakoid lumen. The enzyme catalyses [protein]-peptidylproline (omega=180) = [protein]-peptidylproline (omega=0). In terms of biological role, NDH shuttles electrons from NAD(P)H:plastoquinone, via FMN and iron-sulfur (Fe-S) centers, to quinones in the photosynthetic chain and possibly in a chloroplast respiratory chain. The immediate electron acceptor for the enzyme in this species is believed to be plastoquinone. Couples the redox reaction to proton translocation, and thus conserves the redox energy in a proton gradient. PPIases accelerate the folding of proteins. It catalyzes the cis-trans isomerization of proline imidic peptide bonds in oligopeptides. Seems to be essential for stabilizing the NDH subcomplex A. The protein is Photosynthetic NDH subunit of lumenal location 4, chloroplastic of Arabidopsis thaliana (Mouse-ear cress).